The sequence spans 44 residues: MSKLVQAISDAVQAGQNQDWAKLGTSIVGIVENGVGILGKLFGF.

It belongs to the staphylococcal hemolytic protein family.

The protein resides in the secreted. Its function is as follows. Has hemolytic activity and also inhibits the growth of gonococci. The sequence is that of Antibacterial protein 3 homolog from Staphylococcus haemolyticus (strain JCSC1435).